Reading from the N-terminus, the 263-residue chain is Oxygen-evolving enhancer protein 2-1, chloroplastic (263 aa).

Serine 153 carries the post-translational modification Phosphoserine.

The protein belongs to the PsbP family. In terms of assembly, interacts with WAK1.

It localises to the plastid. It is found in the chloroplast thylakoid lumen. Its function is as follows. May be involved in the regulation of photosystem II. This is Oxygen-evolving enhancer protein 2-1, chloroplastic (PSBP1) from Arabidopsis thaliana (Mouse-ear cress).